The primary structure comprises 90 residues: Small ribosomal subunit protein uS17 (90 aa).

It belongs to the universal ribosomal protein uS17 family. As to quaternary structure, part of the 30S ribosomal subunit.

Its function is as follows. One of the primary rRNA binding proteins, it binds specifically to the 5'-end of 16S ribosomal RNA. This Methylobacillus flagellatus (strain ATCC 51484 / DSM 6875 / VKM B-1610 / KT) protein is Small ribosomal subunit protein uS17.